The sequence spans 131 residues: 14.7 kDa heat shock protein (131 aa).

Polar residues predominate over residues 1–11 (MSRNMEVNAGS). Residues 1 to 20 (MSRNMEVNAGSSGEIPSPIR) form a disordered region. The sHSP domain maps to 22 to 131 (RFQKSGSQAV…INVKERILHY (110 aa)).

Belongs to the small heat shock protein (HSP20) family. As to quaternary structure, may form oligomeric structures.

The protein localises to the cytoplasm. The sequence is that of 14.7 kDa heat shock protein (HSP14.7) from Arabidopsis thaliana (Mouse-ear cress).